A 373-amino-acid polypeptide reads, in one-letter code: Dual-specificity RNA methyltransferase RlmN (373 aa).

The active-site Proton acceptor is Glu94. In terms of domain architecture, Radical SAM core spans 100–339 (EDDRATLCVS…VIVRKTRGDD (240 aa)). Cys107 and Cys344 are oxidised to a cystine. 3 residues coordinate [4Fe-4S] cluster: Cys114, Cys118, and Cys121. S-adenosyl-L-methionine is bound by residues 168–169 (GE), Ser200, 222–224 (SIH), and Asn301. Cys344 functions as the S-methylcysteine intermediate in the catalytic mechanism.

The protein belongs to the radical SAM superfamily. RlmN family. [4Fe-4S] cluster is required as a cofactor.

The protein localises to the cytoplasm. The catalysed reaction is adenosine(2503) in 23S rRNA + 2 reduced [2Fe-2S]-[ferredoxin] + 2 S-adenosyl-L-methionine = 2-methyladenosine(2503) in 23S rRNA + 5'-deoxyadenosine + L-methionine + 2 oxidized [2Fe-2S]-[ferredoxin] + S-adenosyl-L-homocysteine. It carries out the reaction adenosine(37) in tRNA + 2 reduced [2Fe-2S]-[ferredoxin] + 2 S-adenosyl-L-methionine = 2-methyladenosine(37) in tRNA + 5'-deoxyadenosine + L-methionine + 2 oxidized [2Fe-2S]-[ferredoxin] + S-adenosyl-L-homocysteine. Its function is as follows. Specifically methylates position 2 of adenine 2503 in 23S rRNA and position 2 of adenine 37 in tRNAs. m2A2503 modification seems to play a crucial role in the proofreading step occurring at the peptidyl transferase center and thus would serve to optimize ribosomal fidelity. The polypeptide is Dual-specificity RNA methyltransferase RlmN (Shewanella woodyi (strain ATCC 51908 / MS32)).